We begin with the raw amino-acid sequence, 337 residues long: DNA-directed RNA polymerase subunit alpha (337 aa).

Residues 1–233 are alpha N-terminal domain (alpha-NTD); it reads MVREEVTIST…NLFIPFLHAE (233 aa). Residues 266 to 337 form an alpha C-terminal domain (alpha-CTD) region; the sequence is GIALKCIFID…FAMNLPKDFF (72 aa).

This sequence belongs to the RNA polymerase alpha chain family. In terms of assembly, in plastids the minimal PEP RNA polymerase catalytic core is composed of four subunits: alpha, beta, beta', and beta''. When a (nuclear-encoded) sigma factor is associated with the core the holoenzyme is formed, which can initiate transcription.

It is found in the plastid. The protein resides in the chloroplast. It carries out the reaction RNA(n) + a ribonucleoside 5'-triphosphate = RNA(n+1) + diphosphate. Its function is as follows. DNA-dependent RNA polymerase catalyzes the transcription of DNA into RNA using the four ribonucleoside triphosphates as substrates. In Ceratophyllum demersum (Rigid hornwort), this protein is DNA-directed RNA polymerase subunit alpha.